The sequence spans 460 residues: Hydroxyproline dehydrogenase (460 aa).

An N6-acetyllysine modification is found at lysine 310.

This sequence belongs to the proline oxidase family. Requires FAD as cofactor.

The enzyme catalyses trans-4-hydroxy-L-proline + a quinone = (3R,5S)-1-pyrroline-3-hydroxy-5-carboxylate + a quinol + H(+). The catalysed reaction is L-proline + a quinone = (S)-1-pyrroline-5-carboxylate + a quinol + H(+). Its activity is regulated as follows. Hydroproxyproline dehydrogenase activity is inhibited by THFA,(1R,3R)3-OH-cyclopentane-COOH and 5-OH-1H-pyrazole-3-COOH. Its function is as follows. Dehydrogenase that converts trans-4-L-hydroxyproline to delta-1-pyrroline-3-hydroxy-5-carboxylate (Hyp) using ubiquinone-10 as the terminal electron acceptor. Can also use proline as a substrate but with a very much lower efficiency. Does not react with other diastereomers of Hyp: trans-4-D-hydroxyproline and cis-4-L-hydroxyproline. Ubiquininone analogs such as menadione, duroquinone and ubiquinone-1 react more efficiently than oxygen as the terminal electron acceptor during catalysis. This chain is Hydroxyproline dehydrogenase, found in Homo sapiens (Human).